The sequence spans 373 residues: MTIDYYETLSVERDADQGTIKKAYRKLAMKYHPDRNQGDKEAETLFKECTEAYEVLRDESKRRIYDTYGHEGLKNNGQRDTGGAGDIFSHFGDLFGFGGGGGRSQARRNGPIEGNDLRYDVSISFMESIQGVSKEVKLSRRETCWTCEGTGSRPGYQPQTCPTCNGRGQVLRSQGFFQVSTTCPECEGEGQVIKEPCNDCHGEGLVKKTKTVAIKIPAGVDTGARMRLRGEGEGGRRGGPSGDLFVIVHVSSHEFFERDGDTIYCRLPVSMTTAALGDTVDVPTVHGKKNLKIPAGSQSGERFTLRGEGVPSLRGRGNGDMVVELHVETPTGLCEEQKKMLRDFHSFCEEHGQHEKTKGFFAKLFDEVLGKNK.

The region spanning 4–69 (DYYETLSVER…SKRRIYDTYG (66 aa)) is the J domain. A CR-type zinc finger spans residues 131 to 209 (GVSKEVKLSR…CHGEGLVKKT (79 aa)). Zn(2+) contacts are provided by Cys144, Cys147, Cys161, Cys164, Cys183, Cys186, Cys197, and Cys200. 4 CXXCXGXG motif repeats span residues 144-151 (CWTCEGTG), 161-168 (CPTCNGRG), 183-190 (CPECEGEG), and 197-204 (CNDCHGEG).

This sequence belongs to the DnaJ family. As to quaternary structure, homodimer. Zn(2+) is required as a cofactor.

The protein resides in the cytoplasm. Functionally, participates actively in the response to hyperosmotic and heat shock by preventing the aggregation of stress-denatured proteins and by disaggregating proteins, also in an autonomous, DnaK-independent fashion. Unfolded proteins bind initially to DnaJ; upon interaction with the DnaJ-bound protein, DnaK hydrolyzes its bound ATP, resulting in the formation of a stable complex. GrpE releases ADP from DnaK; ATP binding to DnaK triggers the release of the substrate protein, thus completing the reaction cycle. Several rounds of ATP-dependent interactions between DnaJ, DnaK and GrpE are required for fully efficient folding. Also involved, together with DnaK and GrpE, in the DNA replication of plasmids through activation of initiation proteins. The polypeptide is Chaperone protein DnaJ (Desulfotalea psychrophila (strain LSv54 / DSM 12343)).